Here is a 274-residue protein sequence, read N- to C-terminus: Diaminopimelate epimerase (274 aa).

The substrate site is built by asparagine 11, glutamine 44, and asparagine 64. Cysteine 73 (proton donor) is an active-site residue. Substrate is bound by residues 74 to 75, asparagine 157, asparagine 190, and 208 to 209; these read GN and ER. Cysteine 217 acts as the Proton acceptor in catalysis. 218 to 219 is a substrate binding site; that stretch reads GS.

It belongs to the diaminopimelate epimerase family. Homodimer.

Its subcellular location is the cytoplasm. It catalyses the reaction (2S,6S)-2,6-diaminopimelate = meso-2,6-diaminopimelate. Its pathway is amino-acid biosynthesis; L-lysine biosynthesis via DAP pathway; DL-2,6-diaminopimelate from LL-2,6-diaminopimelate: step 1/1. In terms of biological role, catalyzes the stereoinversion of LL-2,6-diaminopimelate (L,L-DAP) to meso-diaminopimelate (meso-DAP), a precursor of L-lysine and an essential component of the bacterial peptidoglycan. The protein is Diaminopimelate epimerase of Histophilus somni (strain 129Pt) (Haemophilus somnus).